We begin with the raw amino-acid sequence, 540 residues long: Chaperonin GroEL (540 aa).

Residues 29–32 (TLGP), 86–90 (DGTTT), Gly-413, 476–478 (NAA), and Asp-492 each bind ATP.

This sequence belongs to the chaperonin (HSP60) family. Forms a cylinder of 14 subunits composed of two heptameric rings stacked back-to-back. Interacts with the co-chaperonin GroES.

It is found in the cytoplasm. The enzyme catalyses ATP + H2O + a folded polypeptide = ADP + phosphate + an unfolded polypeptide.. Functionally, together with its co-chaperonin GroES, plays an essential role in assisting protein folding. The GroEL-GroES system forms a nano-cage that allows encapsulation of the non-native substrate proteins and provides a physical environment optimized to promote and accelerate protein folding. In Streptococcus constellatus, this protein is Chaperonin GroEL.